The primary structure comprises 393 residues: S-adenosylmethionine synthase 2 (393 aa).

Glu-9 contacts Mg(2+). His-15 serves as a coordination point for ATP. A K(+)-binding site is contributed by Glu-43. L-methionine-binding residues include Glu-56 and Gln-99. ATP is bound by residues 167 to 169, 235 to 238, Asp-246, 252 to 253, Ala-269, Lys-273, and Lys-277; these read DGK, SGRF, and RK. L-methionine is bound at residue Asp-246. Lys-277 is an L-methionine binding site.

The protein belongs to the AdoMet synthase family. Homotetramer. The cofactor is Mn(2+). Requires Mg(2+) as cofactor. It depends on Co(2+) as a cofactor. K(+) is required as a cofactor.

Its subcellular location is the cytoplasm. The catalysed reaction is L-methionine + ATP + H2O = S-adenosyl-L-methionine + phosphate + diphosphate. The protein operates within amino-acid biosynthesis; S-adenosyl-L-methionine biosynthesis; S-adenosyl-L-methionine from L-methionine: step 1/1. Catalyzes the formation of S-adenosylmethionine from methionine and ATP. The reaction comprises two steps that are both catalyzed by the same enzyme: formation of S-adenosylmethionine (AdoMet) and triphosphate, and subsequent hydrolysis of the triphosphate. May be involved in the synthesis of betain in response to abiotic stress such as high salinity. The polypeptide is S-adenosylmethionine synthase 2 (SAMS2) (Beta vulgaris (Sugar beet)).